The primary structure comprises 931 residues: Netrin receptor UNC5C (931 aa).

The signal sequence occupies residues 1 to 40 (MRKGLRATAARCGLGLGYLLQMLVLPALALLSASGTGSAA). The Extracellular portion of the chain corresponds to 41–380 (QDDDFFHELP…APDSDDVALY (340 aa)). The Ig-like domain maps to 62 to 159 (PHFLIEPEEA…AGTTKSRKAY (98 aa)). 9 disulfides stabilise this stretch: Cys-83–Cys-144, Cys-95–Cys-142, Cys-188–Cys-239, Cys-272–Cys-309, Cys-276–Cys-313, Cys-287–Cys-299, Cys-328–Cys-362, Cys-332–Cys-367, and Cys-340–Cys-352. An Ig-like C2-type domain is found at 161-256 (RIAYLRKTFE…KRKSTTATVI (96 aa)). N-linked (GlcNAc...) asparagine glycosylation is present at Asn-236. TSP type-1 domains lie at 260-314 (NGGW…TLCP) and 316-368 (DGRW…GLCM). Residue Asn-361 is glycosylated (N-linked (GlcNAc...) asparagine). Residues 381–401 (VGIVIAVTVCLAITVVVALFV) form a helical membrane-spanning segment. Residues 402 to 931 (YRKNHRDFES…VVSLAAEGQY (530 aa)) are Cytoplasmic-facing. The interval 402 to 931 (YRKNHRDFES…VVSLAAEGQY (530 aa)) is required for netrin-mediated axon repulsion of neuronal growth cones. Residue Ser-502 is modified to Phosphoserine. The region spanning 530 to 673 (CTAFGTFNSL…LSTYALVGQS (144 aa)) is the ZU5 domain. Tyr-568 bears the Phosphotyrosine mark. An interaction with DCC region spans residues 694-712 (SLEYSIRVYCLDDTQDALK). Residues 850–929 (QKLCSSLDAP…ETVVSLAAEG (80 aa)) enclose the Death domain.

It belongs to the unc-5 family. As to quaternary structure, interacts with DCC (via cytoplasmic domain). Interacts (tyrosine phosphorylated form) with PTPN11. Interacts (via extracellular domain) with FLRT3 (via extracellular domain). Interacts (via Ig-like C2-type domain) with DSCAM (via extracellular domain). Interacts (via death domain) with DAPK1. Interacts (via cytoplasmic domain) with TUBB3; this interaction is decreased by NTN1/Netrin-1. Proteolytically cleaved by caspases during apoptosis. The cleavage does not take place when the receptor is associated with netrin ligand. Its cleavage by caspases is required to induce apoptosis. In terms of processing, phosphorylated on different cytoplasmic tyrosine residues. Phosphorylation of Tyr-568 leads to an interaction with PTPN11 phosphatase, suggesting that its activity is regulated by phosphorylation/dephosphorylation. Tyrosine phosphorylation is netrin-dependent. As to expression, detected in brain (at protein level). Mainly expressed in brain. Also expressed in kidney. Not expressed in developing or adult lung.

The protein localises to the cell membrane. Its subcellular location is the cell surface. It localises to the synapse. It is found in the synaptosome. The protein resides in the cell projection. The protein localises to the axon. Its subcellular location is the dendrite. It localises to the growth cone. It is found in the lamellipodium. The protein resides in the filopodium. In terms of biological role, receptor for netrin required for axon guidance. Mediates axon repulsion of neuronal growth cones in the developing nervous system upon ligand binding. NTN1/Netrin-1 binding might cause dissociation of UNC5C from polymerized TUBB3 in microtubules and thereby lead to increased microtubule dynamics and axon repulsion. Axon repulsion in growth cones may also be caused by its association with DCC that may trigger signaling for repulsion. Might also collaborate with DSCAM in NTN1-mediated axon repulsion independently of DCC. Also involved in corticospinal tract axon guidance independently of DCC. Involved in dorsal root ganglion axon projection towards the spinal cord. It also acts as a dependence receptor required for apoptosis induction when not associated with netrin ligand. The sequence is that of Netrin receptor UNC5C (Unc5c) from Rattus norvegicus (Rat).